Consider the following 218-residue polypeptide: MIKLEGITKSFGSLQVLKGIDLEINKGEIVSIVGPSGAGKTTLLQIMGTLDEPDAGTVAIDGTVVSRMKEKELSAFRNKNIGFVFQFHQLLPEFTALENVMIPAFIAGVSSKEANERAMEILAFMGLTDRASHKPNELSGGEKQRVAVARALINHPAVILADEPSGSLDTHNKEDLHQLFFDLRDRLGQTFVIVTHDEGLAKITDRTVHMVDGTIKKD.

The ABC transporter domain maps to 2–218 (IKLEGITKSF…HMVDGTIKKD (217 aa)). 34 to 41 (GPSGAGKT) provides a ligand contact to ATP.

It belongs to the ABC transporter superfamily. Lipoprotein translocase (TC 3.A.1.125) family. The complex is composed of two ATP-binding proteins (LolD) and two transmembrane proteins (LolC and LolE).

The protein localises to the cell inner membrane. Its function is as follows. Part of the ABC transporter complex LolCDE involved in the translocation of mature outer membrane-directed lipoproteins, from the inner membrane to the periplasmic chaperone, LolA. Responsible for the formation of the LolA-lipoprotein complex in an ATP-dependent manner. In Bacteroides thetaiotaomicron (strain ATCC 29148 / DSM 2079 / JCM 5827 / CCUG 10774 / NCTC 10582 / VPI-5482 / E50), this protein is Lipoprotein-releasing system ATP-binding protein LolD.